The primary structure comprises 610 residues: UvrABC system protein C (610 aa).

The GIY-YIG domain maps to 16–94 (SQPGVYSMYD…IKLYQPRYNV (79 aa)). A UVR domain is found at 204–239 (QQVLNQLVERMELASRALNFEDAAHARDQIQAVRRV).

Belongs to the UvrC family. In terms of assembly, interacts with UvrB in an incision complex.

Its subcellular location is the cytoplasm. In terms of biological role, the UvrABC repair system catalyzes the recognition and processing of DNA lesions. UvrC both incises the 5' and 3' sides of the lesion. The N-terminal half is responsible for the 3' incision and the C-terminal half is responsible for the 5' incision. This is UvrABC system protein C from Sodalis glossinidius (strain morsitans).